A 273-amino-acid polypeptide reads, in one-letter code: Diaminopimelate epimerase (273 aa).

Asn11 and Asn60 together coordinate substrate. The active-site Proton donor is Cys69. Substrate contacts are provided by residues 70–71, Asn181, and 199–200; these read GN and ER. The active-site Proton acceptor is the Cys209. 210-211 contacts substrate; that stretch reads GT.

It belongs to the diaminopimelate epimerase family. Homodimer.

It is found in the cytoplasm. It catalyses the reaction (2S,6S)-2,6-diaminopimelate = meso-2,6-diaminopimelate. Its pathway is amino-acid biosynthesis; L-lysine biosynthesis via DAP pathway; DL-2,6-diaminopimelate from LL-2,6-diaminopimelate: step 1/1. Catalyzes the stereoinversion of LL-2,6-diaminopimelate (L,L-DAP) to meso-diaminopimelate (meso-DAP), a precursor of L-lysine and an essential component of the bacterial peptidoglycan. This chain is Diaminopimelate epimerase, found in Helicobacter pylori (strain HPAG1).